Reading from the N-terminus, the 416-residue chain is Tyrosine-protein phosphatase non-receptor type 2 (416 aa).

The Tyrosine-protein phosphatase domain occupies 5-275 (IEREFEELDA…RFSYMAIIEG (271 aa)). Phosphotyrosine is present on Y22. At S52 the chain carries Phosphoserine. Y68 is modified (phosphotyrosine). Substrate is bound by residues D182, 216–222 (CSAGIGR), and Q260. The Phosphocysteine intermediate role is filled by C216. C216 bears the S-nitrosocysteine mark. Residues S293, S298, S304, S320, and S339 each carry the phosphoserine modification. The interval 341–410 (ESILRKRIRE…WTLLFQLNVL (70 aa)) is endoplasmic reticulum location. Residues 371–410 (ERKRKRWLYWQPILTKMGFVSVILVGALVGWTLLFQLNVL) are may mediate interaction with STX17.

The protein belongs to the protein-tyrosine phosphatase family. Non-receptor class 1 subfamily. As to quaternary structure, interacts with RMDN3. Interacts with TMED9. Interacts with STX17; dephosphorylates STX17. Interacts with ITGA1 (via cytoplasmic domain); activates the phosphatase activity towards EGFR. Interacts with TRAF2; probably involved in tumor necrosis factor-mediated signaling. Interacts with MET. Interacts with FAM220A and STAT3; interaction with FAM220A promotes interaction of PTPN2 with transcriptional activator STAT3, leading to dephosphorylation of STAT3 by PTPN2 and negative regulation of STAT3 transcriptional activator activity. In terms of processing, specifically phosphorylated in a cell cycle-dependent manner by cyclin-dependent kinases CDK1 and CDK2. Probably activated through phosphorylation by PKR. In terms of tissue distribution, does not show tissue- or cell-type specificity although levels of transcription show variability. Macrophages showed higher levels of expression than lymphocytes.

Its subcellular location is the cytoplasm. It localises to the endoplasmic reticulum-Golgi intermediate compartment. The protein localises to the endoplasmic reticulum. It is found in the nucleus membrane. The protein resides in the nucleus. Its subcellular location is the cell membrane. The catalysed reaction is O-phospho-L-tyrosyl-[protein] + H2O = L-tyrosyl-[protein] + phosphate. Non-receptor type tyrosine-specific phosphatase that dephosphorylates receptor protein tyrosine kinases including INSR, EGFR, CSF1R, PDGFR. Also dephosphorylates non-receptor protein tyrosine kinases like JAK1, JAK2, JAK3, Src family kinases, STAT1, STAT3 and STAT6 either in the nucleus or the cytoplasm. Negatively regulates numerous signaling pathways and biological processes like hematopoiesis, inflammatory response, cell proliferation and differentiation, and glucose homeostasis. Plays a multifaceted and important role in the development of the immune system. Functions in T-cell receptor signaling through dephosphorylation of FYN and LCK to control T-cells differentiation and activation. Dephosphorylates CSF1R, negatively regulating its downstream signaling and macrophage differentiation. Negatively regulates cytokine (IL2/interleukin-2 and interferon)-mediated signaling through dephosphorylation of the cytoplasmic kinases JAK1, JAK3 and their substrate STAT1, that propagate signaling downstream of the cytokine receptors. Also regulates the IL6/interleukin-6 and IL4/interleukin-4 cytokine signaling through dephosphorylation of STAT3 and STAT6 respectively. In addition to the immune system, it is involved in anchorage-dependent, negative regulation of EGF-stimulated cell growth. Activated by the integrin ITGA1/ITGB1, it dephosphorylates EGFR and negatively regulates EGF signaling. Dephosphorylates PDGFRB and negatively regulates platelet-derived growth factor receptor-beta signaling pathway and therefore cell proliferation. Negatively regulates tumor necrosis factor-mediated signaling downstream via MAPK through SRC dephosphorylation. May also regulate the hepatocyte growth factor receptor signaling pathway through dephosphorylation of the hepatocyte growth factor receptor MET. Also plays an important role in glucose homeostasis. For instance, negatively regulates the insulin receptor signaling pathway through the dephosphorylation of INSR and control gluconeogenesis and liver glucose production through negative regulation of the IL6 signaling pathways. May also bind DNA. In Rattus norvegicus (Rat), this protein is Tyrosine-protein phosphatase non-receptor type 2 (Ptpn2).